Consider the following 139-residue polypeptide: MSKRGRGGSSGNKFRMSLGLPVGAVVNCADNTGAKNLYVISSGVRGRLNRLPAAAVGDMVMATVKKGKPDLRKKVMPAVIVRQRKPWRRKDGVFMYFEDNAGVIVNPKGEMNPSAITGPIGKECADLWPRIASAANAIV.

This sequence belongs to the universal ribosomal protein uL14 family.

In Syntrichia ruralis (Great hairy screw-moss), this protein is Large ribosomal subunit protein uL14 (RPL23).